The following is an 842-amino-acid chain: Alpha-glucan phosphorylase, H isozyme (842 aa).

N6-(pyridoxal phosphate)lysine is present on Lys688.

It belongs to the glycogen phosphorylase family. The cofactor is pyridoxal 5'-phosphate.

It localises to the cytoplasm. The catalysed reaction is [(1-&gt;4)-alpha-D-glucosyl](n) + phosphate = [(1-&gt;4)-alpha-D-glucosyl](n-1) + alpha-D-glucose 1-phosphate. Functionally, phosphorylase is an important allosteric enzyme in carbohydrate metabolism. Enzymes from different sources differ in their regulatory mechanisms and in their natural substrates. However, all known phosphorylases share catalytic and structural properties. The H isoform exhibits higher affinity for branched polyglucans such as soluble starch or glycogen. This Vicia faba (Broad bean) protein is Alpha-glucan phosphorylase, H isozyme.